Here is a 204-residue protein sequence, read N- to C-terminus: Synaptosomal-associated protein 25-A (204 aa).

Positions 1–11 are enriched in basic and acidic residues; it reads MAEDADMRNEL. A disordered region spans residues 1 to 25; that stretch reads MAEDADMRNELSDMQQRADQLADES. 2 consecutive t-SNARE coiled-coil homology domains span residues 19 to 81 and 138 to 200; these read DQLA…LNDL and DARE…ATKM.

Belongs to the SNAP-25 family.

It localises to the synapse. The protein localises to the synaptosome. It is found in the cell membrane. In terms of biological role, may play an important role in the synaptic function of specific neuronal systems. Associates with proteins involved in vesicle docking and membrane fusion. The sequence is that of Synaptosomal-associated protein 25-A (snap25a) from Carassius auratus (Goldfish).